A 196-amino-acid polypeptide reads, in one-letter code: MVAETGTGLFSAHKITEELASTSLDSGVHLLFDIHDRTFQALPDFLAEHRYQEVNDIRNTVFQKAFDTNLSIYEYLVHHPQLQAHMQDAMKLHQPEGDWLSVFPADEIVGNQQTAPDPARVLFVDIGGGMGQQCIRFRERYPDLAGRVILQDIPQTINRVPKPMPNGIEAVPHSFEDPQPIKSKSPRLDNLARERL.

S-adenosyl-L-methionine is bound by residues 127-128 (GG), aspartate 152, and 174-175 (SF). The interval 166–196 (NGIEAVPHSFEDPQPIKSKSPRLDNLARERL) is disordered. Over residues 186-196 (PRLDNLARERL) the composition is skewed to basic and acidic residues.

It belongs to the class I-like SAM-binding methyltransferase superfamily. Cation-independent O-methyltransferase family.

It participates in secondary metabolite biosynthesis; terpenoid biosynthesis. Its function is as follows. O-methyltransferase; part of the gene cluster that mediates the biosynthesis of diterpenoid pyrones. The first step of the pathway is the synthesis of the alpha-pyrone moiety by the polyketide synthase dpmpA via condensation of one acetyl-CoA starter unit with 3 malonyl-CoA units and 2 methylations. The alpha-pyrone is then combined with geranylgeranyl pyrophosphate (GGPP) formed by the GGPP synthase dpmpD through the action of the prenyltransferase dpmpC to yield a linear alpha-pyrone diterpenoid. Subsequent steps in the diterpenoid pyrone biosynthetic pathway involve the decalin core formation, which is initiated by the epoxidation of the C10-C11 olefin by the FAD-dependent oxidoreductase dpmpE, and is followed by a cyclization cascade catalyzed by the terpene cyclase dpmpB. The short chain dehydrogenase/reductase dpmpG then oxidizes the 8S hydroxy group to a ketone and the short chain dehydrogenase/reductase dpmpH reduces the ketone to the 8R hydroxy group to yield higginsianin B. Higginsianin B is further methylated by the methyltransferase dpmpI to produce the intermediate named FDDP B. The cytochrome P450 monooxygenase dpmpJ then oxidizes the C-26 methyl to primary alcohol, producing the final diterpenoid pyrone with a C-26 primary alcohol on the gamma-pyrone moiety named FDDP C. This is O-methyltransferase dpmpI from Macrophomina phaseolina (strain MS6) (Charcoal rot fungus).